A 49-amino-acid chain; its full sequence is Isoflavone reductase homolog 2 (49 aa).

Residue 5–11 participates in NADP(+) binding; the sequence is GGTGYIG.

The protein belongs to the NmrA-type oxidoreductase family. Isoflavone reductase subfamily.

It is found in the cytoplasm. This Pseudotsuga menziesii (Douglas-fir) protein is Isoflavone reductase homolog 2.